The sequence spans 341 residues: Phenylalanine--tRNA ligase alpha subunit (341 aa).

Position 256 (Glu256) interacts with Mg(2+).

It belongs to the class-II aminoacyl-tRNA synthetase family. Phe-tRNA synthetase alpha subunit type 1 subfamily. In terms of assembly, tetramer of two alpha and two beta subunits. The cofactor is Mg(2+).

The protein localises to the cytoplasm. The catalysed reaction is tRNA(Phe) + L-phenylalanine + ATP = L-phenylalanyl-tRNA(Phe) + AMP + diphosphate + H(+). This chain is Phenylalanine--tRNA ligase alpha subunit, found in Chlamydia felis (strain Fe/C-56) (Chlamydophila felis).